The chain runs to 382 residues: UDP-4-amino-4-deoxy-L-arabinose--oxoglutarate aminotransferase (382 aa).

Residue Lys183 is modified to N6-(pyridoxal phosphate)lysine.

This sequence belongs to the DegT/DnrJ/EryC1 family. ArnB subfamily. As to quaternary structure, homodimer. It depends on pyridoxal 5'-phosphate as a cofactor.

It catalyses the reaction UDP-4-amino-4-deoxy-beta-L-arabinose + 2-oxoglutarate = UDP-beta-L-threo-pentopyranos-4-ulose + L-glutamate. Its pathway is nucleotide-sugar biosynthesis; UDP-4-deoxy-4-formamido-beta-L-arabinose biosynthesis; UDP-4-deoxy-4-formamido-beta-L-arabinose from UDP-alpha-D-glucuronate: step 2/3. The protein operates within bacterial outer membrane biogenesis; lipopolysaccharide biosynthesis. Catalyzes the conversion of UDP-4-keto-arabinose (UDP-Ara4O) to UDP-4-amino-4-deoxy-L-arabinose (UDP-L-Ara4N). The modified arabinose is attached to lipid A and is required for resistance to polymyxin and cationic antimicrobial peptides. This Pseudomonas syringae pv. syringae (strain B728a) protein is UDP-4-amino-4-deoxy-L-arabinose--oxoglutarate aminotransferase.